The chain runs to 202 residues: ATP-dependent Clp protease proteolytic subunit (202 aa).

S101 (nucleophile) is an active-site residue. The active site involves H126.

It belongs to the peptidase S14 family. As to quaternary structure, component of the chloroplastic Clp protease core complex.

The protein localises to the plastid. The protein resides in the chloroplast stroma. It catalyses the reaction Hydrolysis of proteins to small peptides in the presence of ATP and magnesium. alpha-casein is the usual test substrate. In the absence of ATP, only oligopeptides shorter than five residues are hydrolyzed (such as succinyl-Leu-Tyr-|-NHMec, and Leu-Tyr-Leu-|-Tyr-Trp, in which cleavage of the -Tyr-|-Leu- and -Tyr-|-Trp bonds also occurs).. Its function is as follows. Cleaves peptides in various proteins in a process that requires ATP hydrolysis. Has a chymotrypsin-like activity. Plays a major role in the degradation of misfolded proteins. The protein is ATP-dependent Clp protease proteolytic subunit of Drimys granadensis.